A 229-amino-acid chain; its full sequence is Cytochrome c oxidase subunit 2 (229 aa).

Residues 1–26 (MSTWANLGLQDSASPLMEQLIFFHDH) are Mitochondrial intermembrane-facing. Residues 27 to 48 (ALLILVMITILVGYLMFMLFFN) form a helical membrane-spanning segment. At 49-62 (SYINRFLLHGQLIE) the chain is on the mitochondrial matrix side. Residues 63–82 (MIWTILPAIILLFIAMPSLR) form a helical membrane-spanning segment. Residues 83–229 (LLYLLDEINE…IKWIASKVNS (147 aa)) lie on the Mitochondrial intermembrane side of the membrane. Positions 161, 196, 198, 200, 204, and 207 each coordinate Cu cation. Mg(2+) is bound at residue Glu-198.

It belongs to the cytochrome c oxidase subunit 2 family. As to quaternary structure, component of the cytochrome c oxidase (complex IV, CIV), a multisubunit enzyme composed of a catalytic core of 3 subunits and several supernumerary subunits. The complex exists as a monomer or a dimer and forms supercomplexes (SCs) in the inner mitochondrial membrane with ubiquinol-cytochrome c oxidoreductase (cytochrome b-c1 complex, complex III, CIII). Cu cation serves as cofactor.

It localises to the mitochondrion inner membrane. The enzyme catalyses 4 Fe(II)-[cytochrome c] + O2 + 8 H(+)(in) = 4 Fe(III)-[cytochrome c] + 2 H2O + 4 H(+)(out). Its function is as follows. Component of the cytochrome c oxidase, the last enzyme in the mitochondrial electron transport chain which drives oxidative phosphorylation. The respiratory chain contains 3 multisubunit complexes succinate dehydrogenase (complex II, CII), ubiquinol-cytochrome c oxidoreductase (cytochrome b-c1 complex, complex III, CIII) and cytochrome c oxidase (complex IV, CIV), that cooperate to transfer electrons derived from NADH and succinate to molecular oxygen, creating an electrochemical gradient over the inner membrane that drives transmembrane transport and the ATP synthase. Cytochrome c oxidase is the component of the respiratory chain that catalyzes the reduction of oxygen to water. Electrons originating from reduced cytochrome c in the intermembrane space (IMS) are transferred via the dinuclear copper A center (CU(A)) of subunit 2 and heme A of subunit 1 to the active site in subunit 1, a binuclear center (BNC) formed by heme A3 and copper B (CU(B)). The BNC reduces molecular oxygen to 2 water molecules using 4 electrons from cytochrome c in the IMS and 4 protons from the mitochondrial matrix. This chain is Cytochrome c oxidase subunit 2 (mt:CoII), found in Drosophila bifasciata (Fruit fly).